The sequence spans 1172 residues: DNA-directed RNA polymerase subunit beta (1172 aa).

This sequence belongs to the RNA polymerase beta chain family. The RNAP catalytic core consists of 2 alpha, 1 beta, 1 beta' and 1 omega subunit. When a sigma factor is associated with the core the holoenzyme is formed, which can initiate transcription.

It catalyses the reaction RNA(n) + a ribonucleoside 5'-triphosphate = RNA(n+1) + diphosphate. Functionally, DNA-dependent RNA polymerase catalyzes the transcription of DNA into RNA using the four ribonucleoside triphosphates as substrates. The protein is DNA-directed RNA polymerase subunit beta of Mycobacterium sp. (strain JLS).